We begin with the raw amino-acid sequence, 158 residues long: Phosphopantetheine adenylyltransferase (158 aa).

Serine 8 lines the substrate pocket. ATP-binding positions include 8-9 (SF) and histidine 16. Residues lysine 40, threonine 72, and arginine 86 each coordinate substrate. ATP-binding positions include 87 to 89 (GLR), glutamate 97, and 122 to 128 (HSFLSSS).

Belongs to the bacterial CoaD family. As to quaternary structure, homohexamer. It depends on Mg(2+) as a cofactor.

It is found in the cytoplasm. It carries out the reaction (R)-4'-phosphopantetheine + ATP + H(+) = 3'-dephospho-CoA + diphosphate. It functions in the pathway cofactor biosynthesis; coenzyme A biosynthesis; CoA from (R)-pantothenate: step 4/5. In terms of biological role, reversibly transfers an adenylyl group from ATP to 4'-phosphopantetheine, yielding dephospho-CoA (dPCoA) and pyrophosphate. The polypeptide is Phosphopantetheine adenylyltransferase (Prochlorococcus marinus (strain NATL1A)).